A 304-amino-acid chain; its full sequence is MTKVRKAIIPAAGLGTRFLPATKALAKEMLPIVDKPTIQFIVEEALKSGIEEILVVTGKAKRSIEDHFDSNFELEYNLQAKGKNELLKLVDETTAINLHFIRQSHPRGLGDAVLQAKAFVGNEPFVVMLGDDLMDITNASAKPLTKQLMEDYDKTHASTIAVMKVPHEDVSSYGVIAPQGKAVKGLYSVDTFVEKPQPEDAPSDLAIIGRYLLTPEIFDILERQTPGAGNEVQLTDAIDTLNKTQRVFAREFKGNRYDVGDKFGFMKTSIDYALEHPQVKEDLKNYIIKLGKALEKSKVPTHSK.

This sequence belongs to the UDPGP type 2 family.

It catalyses the reaction alpha-D-glucose 1-phosphate + UTP + H(+) = UDP-alpha-D-glucose + diphosphate. Its pathway is carbohydrate metabolism; nucleotide-sugar metabolism. The sequence is that of UTP--glucose-1-phosphate uridylyltransferase 1 (hasC1) from Streptococcus pyogenes serotype M18 (strain MGAS8232).